We begin with the raw amino-acid sequence, 904 residues long: Alpha-actinin-4 (904 aa).

The segment at 1–27 is disordered; that stretch reads MVDYHSAGQPYPYGGNGPGPNGDYMAQ. The actin-binding stretch occupies residues 1–259; that stretch reads MVDYHSAGQP…IMTYVSSFYH (259 aa). Calponin-homology (CH) domains lie at 43–147 and 156–262; these read KQQR…LRFA and TSAK…HAFS. Spectrin repeat units follow at residues 286 to 396, 406 to 511, 521 to 632, and 642 to 745; these read HLME…WLLN, HLAE…ALEK, ELHL…ALQD, and RLRR…EVEN. 2 consecutive EF-hand domains span residues 758-793 and 799-834; these read EQMQEFRASFNHFDKDHCGALGPEEFKACLISLGYD and QGDAEFNRIMSLVDPNGSGSVTFQAFIDFMSRETTD. Ca(2+)-binding residues include D771, D773, E782, D812, N814, S816, and S818.

Belongs to the alpha-actinin family. Homodimer; antiparallel. Component of the CART complex. May interact with nuclear receptors.

It is found in the nucleus. The protein localises to the cytoplasm. The protein resides in the cell junction. It localises to the perinuclear region. In terms of biological role, F-actin cross-linking protein which is thought to anchor actin to a variety of intracellular structures. This is a bundling protein. Probably involved in vesicular trafficking via its association with the CART complex. Involved in tight junction assembly in epithelial cells. May also function as a transcriptional coactivator, stimulating transcription mediated by nuclear hormone receptors. In Gallus gallus (Chicken), this protein is Alpha-actinin-4.